Reading from the N-terminus, the 304-residue chain is UTP--glucose-1-phosphate uridylyltransferase 1 (304 aa).

It belongs to the UDPGP type 2 family.

The catalysed reaction is alpha-D-glucose 1-phosphate + UTP + H(+) = UDP-alpha-D-glucose + diphosphate. Its pathway is carbohydrate metabolism; nucleotide-sugar metabolism. The chain is UTP--glucose-1-phosphate uridylyltransferase 1 (hasC1) from Streptococcus pyogenes serotype M3 (strain ATCC BAA-595 / MGAS315).